Consider the following 90-residue polypeptide: Small ribosomal subunit protein uS15 (90 aa).

Belongs to the universal ribosomal protein uS15 family. Part of the 30S ribosomal subunit. Forms a bridge to the 50S subunit in the 70S ribosome, contacting the 23S rRNA.

In terms of biological role, one of the primary rRNA binding proteins, it binds directly to 16S rRNA where it helps nucleate assembly of the platform of the 30S subunit by binding and bridging several RNA helices of the 16S rRNA. Its function is as follows. Forms an intersubunit bridge (bridge B4) with the 23S rRNA of the 50S subunit in the ribosome. This chain is Small ribosomal subunit protein uS15, found in Helicobacter pylori (strain P12).